Here is a 259-residue protein sequence, read N- to C-terminus: Cell division protein DivIB (259 aa).

Residues 1–27 (MADGKVIDIEQKVPDFREQRRRKSRRR) are Cytoplasmic-facing. The helical transmembrane segment at 28 to 45 (LVLYISILAFFLLFVYYF) threads the bilayer. At 46-259 (QSDYSTVGHV…QEEEEIEIEE (214 aa)) the chain is on the extracellular side. A POTRA domain is found at 50 to 118 (STVGHVDVYG…RSITLYVDEY (69 aa)).

Belongs to the FtsQ/DivIB family. DivIB subfamily.

The protein resides in the cell membrane. Its function is as follows. Cell division protein that may be involved in stabilizing or promoting the assembly of the division complex. This chain is Cell division protein DivIB, found in Bacillus selenitireducens (strain ATCC 700615 / DSM 15326 / MLS10).